We begin with the raw amino-acid sequence, 605 residues long: Tegument protein UL47 homolog (605 aa).

The disordered stretch occupies residues 1 to 75 (MATDNARPRS…DPWKLEPAND (75 aa)). Residues 8-17 (PRSRSLRRKS) show a composition bias toward basic residues. The segment covering 54–69 (GADRDPGTRRGIDPWK) has biased composition (basic and acidic residues).

Belongs to the alphaherpesvirinae HHV-1 UL47 family. In terms of assembly, interacts with US3 kinase. Interacts with UL31 and UL34; these interactions seem important for efficient virion nuclear egress. Interacts with UL41/VHS. Phosphorylated by US3. This phosphorylation is required for proper nuclear localization.

The protein localises to the virion tegument. The protein resides in the host nucleus. Its subcellular location is the host cytoplasm. Functionally, tegument protein that can bind to various RNA transcripts. Plays a role in the attenuation of selective viral and cellular mRNA degradation by modulating the activity of host shutoff RNase UL41/VHS. Also plays a role in the primary envelopment of virions in the perinuclear space, probably by interacting with two nuclear egress proteins UL31 and UL34. The chain is Tegument protein UL47 homolog (sORF1) from Amazona oratrix (yellow-headed parrot).